A 432-amino-acid chain; its full sequence is Gamma-glutamyl phosphate reductase (432 aa).

Belongs to the gamma-glutamyl phosphate reductase family.

It is found in the cytoplasm. The enzyme catalyses L-glutamate 5-semialdehyde + phosphate + NADP(+) = L-glutamyl 5-phosphate + NADPH + H(+). It participates in amino-acid biosynthesis; L-proline biosynthesis; L-glutamate 5-semialdehyde from L-glutamate: step 2/2. Its function is as follows. Catalyzes the NADPH-dependent reduction of L-glutamate 5-phosphate into L-glutamate 5-semialdehyde and phosphate. The product spontaneously undergoes cyclization to form 1-pyrroline-5-carboxylate. The polypeptide is Gamma-glutamyl phosphate reductase (Ruminiclostridium cellulolyticum (strain ATCC 35319 / DSM 5812 / JCM 6584 / H10) (Clostridium cellulolyticum)).